Reading from the N-terminus, the 662-residue chain is Eukaryotic peptide chain release factor GTP-binding subunit (662 aa).

Positions 1 to 220 are disordered; the sequence is MASNQPNNGE…PATVTEDATD (220 aa). Over residues 26–40 the composition is skewed to low complexity; the sequence is AKAPTFTPKAAPFIP. Polar residues predominate over residues 62–89; the sequence is YTGQGQNSNSPHPTKSYQQYYQKPTGNT. Over residues 91–102 the composition is skewed to basic and acidic residues; that stretch reads DEDKSRVPDFSK. The segment covering 122–134 has biased composition (polar residues); that stretch reads GGNTSAPKSTKPI. The span at 141–158 shows a compositional bias: low complexity; the sequence is TKAPTTTKPAAPAAQSKT. Position 182 is a phosphothreonine (threonine 182). Positions 192 to 213 are enriched in low complexity; it reads AKTPSAPAAALKKAAEAAEPAT. The region spanning 236 to 464 is the tr-type G domain; sequence KEHVNIVFIG…LDSMTHLERK (229 aa). The tract at residues 245–252 is G1; it reads GHVDAGKS. 245–252 lines the GTP pocket; sequence GHVDAGKS. The interval 301–305 is G2; sequence GKTVE. A G3 region spans residues 322 to 325; it reads DAPG. GTP contacts are provided by residues 384 to 387 and 428 to 429; these read NKMD and AY. A G4 region spans residues 384 to 387; the sequence is NKMD. Residues 427–429 are G5; it reads SAY. The residue at position 539 (serine 539) is a Phosphoserine.

It belongs to the TRAFAC class translation factor GTPase superfamily. Classic translation factor GTPase family. ERF3 subfamily. As to quaternary structure, component of the eRF1-eRF3-GTP ternary complex, composed of sup45/eRF1, sup35/eRF3 and GTP.

The protein resides in the cytoplasm. The catalysed reaction is GTP + H2O = GDP + phosphate + H(+). Its function is as follows. GTPase component of the eRF1-eRF3-GTP ternary complex, a ternary complex that mediates translation termination in response to the termination codons. Sup35/eRF3 mediates sup45/ERF1 delivery to stop codons: The eRF1-eRF3-GTP complex binds to a stop codon in the ribosomal A-site. GTP hydrolysis by sup35/eRF3 induces a conformational change that leads to its dissociation, permitting sup45/eRF1 to accommodate fully in the A-site. The protein is Eukaryotic peptide chain release factor GTP-binding subunit (sup35) of Schizosaccharomyces pombe (strain 972 / ATCC 24843) (Fission yeast).